Reading from the N-terminus, the 216-residue chain is Vascular endothelial growth factor A (216 aa).

The signal sequence occupies residues 1 to 26 (MNFLLTWIHWGLAALLYFHNAKVLQA). 3 disulfides stabilise this stretch: C52–C94, C83–C128, and C87–C130. N101 carries an N-linked (GlcNAc...) asparagine glycan. Residues 140–161 (QEKKSKREKGKGQKRKRKRGRY) form a disordered region. Basic residues predominate over residues 145 to 161 (KREKGKGQKRKRKRGRY).

Belongs to the PDGF/VEGF growth factor family. As to quaternary structure, homodimer; disulfide-linked. Also found as heterodimer with PGF. Interacts to the FLT1/VEGFR1 and KDR/VEGFR2 receptors, heparan sulfate and heparin. Expressed in venom gland, heart, brain, liver, skeletal muscle and kidney.

The protein resides in the secreted. Functionally, growth factor active in angiogenesis, vasculogenesis and endothelial cell growth. Induces endothelial cell proliferation, promotes cell migration, inhibits apoptosis and induces permeabilization of blood vessels. The polypeptide is Vascular endothelial growth factor A (Protobothrops flavoviridis (Habu)).